The chain runs to 435 residues: Evolutionarily conserved signaling intermediate in Toll pathway, mitochondrial (435 aa).

The N-terminal 48 residues, 1–48, are a transit peptide targeting the mitochondrion; it reads MSWVQVNLLVRSLSRGWGGLCRPALSGTPFAQVSLQALRGLHCSAATH. Lysine 372 participates in a covalent cross-link: Glycyl lysine isopeptide (Lys-Gly) (interchain with G-Cter in ubiquitin). Residues 401–435 form a disordered region; the sequence is LTTSRLEGQSPPHSPPKGPEEDDETIQAEQQQGQS.

The protein belongs to the ECSIT family. Interacts with MAP3K1, SMAD4 and TRAF6. Interacts with SMAD1 only after BMP4-treatment. Part of the mitochondrial complex I assembly/MCIA complex that comprises at least the core subunits TMEM126B, NDUFAF1, ECSIT and ACAD9 and complement subunits such as COA1 and TMEM186. Interacts with NDUFAF1. Interacts with ACAD9. Interacts with TRIM59. Interacts with TMEM70 and TMEM242. Interacts (when ubiquitinated) with NF-kappa-B subunits RELA and NFKB1. Interacts with RIGI, IFIT1 and MAVS; these interactions promote RLR-mediated type I IFN induction. Interacts with SQSTM1; this interaction inhibits TLR4 signaling via functional regulation of the TRAF6-ECSIT complex. Interacts with cereblon/CRBN; this interaction inhibits the ubiquitination of ECSIT. In terms of processing, ubiquitinated on Lys-372; leading to translocation in the nucleus together with RELA and NFKB1 and expression of NF-kappa-B-dependent genes. As to expression, detected in heart, brain, lung, liver, skeletal muscle, kidney and testis. Detected in embryonic mesoderm and epiblast, and in extraembryonic ectoderm.

Its subcellular location is the cytoplasm. The protein resides in the nucleus. It is found in the mitochondrion. Its function is as follows. Adapter protein that plays a role in different signaling pathways including TLRs and IL-1 pathways or innate antiviral induction signaling. Plays a role in the activation of NF-kappa-B by forming a signal complex with TRAF6 and TAK1/MAP3K7 to activate TAK1/MAP3K7 leading to activation of IKKs. Once ubiquitinated, interacts with the dissociated RELA and NFKB1 proteins and translocates to the nucleus where it induces NF-kappa-B-dependent gene expression. Plays a role in innate antiviral immune response by bridging the pattern recognition receptors RIGI and MDA5/IFIT1 to the MAVS complex at the mitochondrion. Promotes proteolytic activation of MAP3K1. Involved in the BMP signaling pathway. Required for normal embryonic development. Functionally, as part of the MCIA complex, involved in the assembly of the mitochondrial complex I. In Mus musculus (Mouse), this protein is Evolutionarily conserved signaling intermediate in Toll pathway, mitochondrial.